The following is a 218-amino-acid chain: Eukaryotic translation initiation factor 3 subunit K (218 aa).

The region spanning 42–204 (YDLEANLAVL…NIKPKNIVEK (163 aa)) is the PCI domain.

This sequence belongs to the eIF-3 subunit K family. In terms of assembly, component of the eukaryotic translation initiation factor 3 (eIF-3) complex, which is composed of 13 subunits: eif3a, eif3b, eif3c, eif3d, eif3e, eif3f, eif3g, eif3h, eif3i, eif3j, eif3k, eif3l and eif3m.

The protein localises to the nucleus. It localises to the cytoplasm. Functionally, component of the eukaryotic translation initiation factor 3 (eIF-3) complex, which is involved in protein synthesis of a specialized repertoire of mRNAs and, together with other initiation factors, stimulates binding of mRNA and methionyl-tRNAi to the 40S ribosome. The eIF-3 complex specifically targets and initiates translation of a subset of mRNAs involved in cell proliferation. This chain is Eukaryotic translation initiation factor 3 subunit K (eif3k), found in Xenopus tropicalis (Western clawed frog).